The primary structure comprises 240 residues: DNA repair protein RecO (240 aa).

It belongs to the RecO family.

In terms of biological role, involved in DNA repair and RecF pathway recombination. The chain is DNA repair protein RecO from Actinobacillus pleuropneumoniae serotype 5b (strain L20).